We begin with the raw amino-acid sequence, 123 residues long: Large ribosomal subunit protein uL29 (123 aa).

This sequence belongs to the universal ribosomal protein uL29 family.

The polypeptide is Large ribosomal subunit protein uL29 (RPL35) (Euphorbia esula (Leafy spurge)).